A 517-amino-acid chain; its full sequence is Glycerol kinase 5 (517 aa).

Positions 23 and 24 each coordinate ATP. Residues R93, D270, and Q271 each contribute to the glycerol site. ATP is bound by residues T292, G335, and G432.

It belongs to the FGGY kinase family.

It is found in the cytoplasm. It carries out the reaction glycerol + ATP = sn-glycerol 3-phosphate + ADP + H(+). It functions in the pathway polyol metabolism; glycerol degradation via glycerol kinase pathway; sn-glycerol 3-phosphate from glycerol: step 1/1. In terms of biological role, skin-specific kinase that plays a key role in glycerol metabolism, catalyzing its phosphorylation to produce sn-glycerol 3-phosphate. Involved in skin-specific regulation of sterol regulatory element-binding protein (SREBP) processing and lipid biosynthesis. This is Glycerol kinase 5 (GK5) from Gallus gallus (Chicken).